Here is a 705-residue protein sequence, read N- to C-terminus: Elongation factor G (705 aa).

In terms of domain architecture, tr-type G spans 8–290 (HRYRNIGIMA…GVIHLLPSPA (283 aa)). GTP-binding positions include 17–24 (AHIDAGKT), 88–92 (DTPGH), and 142–145 (NKMD).

This sequence belongs to the TRAFAC class translation factor GTPase superfamily. Classic translation factor GTPase family. EF-G/EF-2 subfamily.

Its subcellular location is the cytoplasm. Catalyzes the GTP-dependent ribosomal translocation step during translation elongation. During this step, the ribosome changes from the pre-translocational (PRE) to the post-translocational (POST) state as the newly formed A-site-bound peptidyl-tRNA and P-site-bound deacylated tRNA move to the P and E sites, respectively. Catalyzes the coordinated movement of the two tRNA molecules, the mRNA and conformational changes in the ribosome. The protein is Elongation factor G of Xylella fastidiosa (strain M23).